Here is a 78-residue protein sequence, read N- to C-terminus: UPF0335 protein RPR_04100 (78 aa).

Belongs to the UPF0335 family.

This chain is UPF0335 protein RPR_04100, found in Rickettsia peacockii (strain Rustic).